Reading from the N-terminus, the 98-residue chain is Elicitin Vex1 (98 aa).

Disulfide bonds link Cys3/Cys71, Cys27/Cys56, and Cys51/Cys95. An N-linked (GlcNAc...) asparagine glycan is attached at Asn92.

Belongs to the elicitin family.

The protein localises to the secreted. Its function is as follows. Induces local and distal defense responses (incompatible hypersensitive reaction) in plants from the solanaceae and cruciferae families. Elicits leaf necrosis and causes the accumulation of pathogenesis-related proteins. Might interact with the lipidic molecules of the plasma membrane. In Phytopythium vexans (Damping-off fungus), this protein is Elicitin Vex1.